The chain runs to 121 residues: Phosphoribosyl-ATP pyrophosphatase (121 aa).

Belongs to the PRA-PH family.

It is found in the cytoplasm. It catalyses the reaction 1-(5-phospho-beta-D-ribosyl)-ATP + H2O = 1-(5-phospho-beta-D-ribosyl)-5'-AMP + diphosphate + H(+). It participates in amino-acid biosynthesis; L-histidine biosynthesis; L-histidine from 5-phospho-alpha-D-ribose 1-diphosphate: step 2/9. This Burkholderia multivorans (strain ATCC 17616 / 249) protein is Phosphoribosyl-ATP pyrophosphatase.